Consider the following 260-residue polypeptide: UPF0246 protein Bcep18194_A5551 (260 aa).

The protein belongs to the UPF0246 family.

This is UPF0246 protein Bcep18194_A5551 from Burkholderia lata (strain ATCC 17760 / DSM 23089 / LMG 22485 / NCIMB 9086 / R18194 / 383).